Here is a 45-residue protein sequence, read N- to C-terminus: Photosystem II reaction center protein K (45 aa).

Residues 1-8 constitute a propeptide that is removed on maturation; sequence MEAALLLA. A helical membrane pass occupies residues 24 to 44; sequence LPVIPVFFLLLAFVWQAAVGF.

This sequence belongs to the PsbK family. As to quaternary structure, PSII is composed of 1 copy each of membrane proteins PsbA, PsbB, PsbC, PsbD, PsbE, PsbF, PsbH, PsbI, PsbJ, PsbK, PsbL, PsbM, PsbT, PsbX, PsbY, PsbZ, Psb30/Ycf12, peripheral proteins PsbO, CyanoQ (PsbQ), PsbU, PsbV and a large number of cofactors. It forms dimeric complexes.

It is found in the cellular thylakoid membrane. Its function is as follows. One of the components of the core complex of photosystem II (PSII). PSII is a light-driven water:plastoquinone oxidoreductase that uses light energy to abstract electrons from H(2)O, generating O(2) and a proton gradient subsequently used for ATP formation. It consists of a core antenna complex that captures photons, and an electron transfer chain that converts photonic excitation into a charge separation. In Synechococcus elongatus (strain ATCC 33912 / PCC 7942 / FACHB-805) (Anacystis nidulans R2), this protein is Photosystem II reaction center protein K.